A 166-amino-acid chain; its full sequence is Urease accessory protein UreE (166 aa).

It belongs to the UreE family.

Its subcellular location is the cytoplasm. In terms of biological role, involved in urease metallocenter assembly. Binds nickel. Probably functions as a nickel donor during metallocenter assembly. This is Urease accessory protein UreE from Azotobacter vinelandii (strain DJ / ATCC BAA-1303).